We begin with the raw amino-acid sequence, 545 residues long: Glucose-6-phosphate isomerase (545 aa).

E351 (proton donor) is an active-site residue. Active-site residues include H382 and K510.

Belongs to the GPI family.

It localises to the cytoplasm. It catalyses the reaction alpha-D-glucose 6-phosphate = beta-D-fructose 6-phosphate. The protein operates within carbohydrate biosynthesis; gluconeogenesis. It participates in carbohydrate degradation; glycolysis; D-glyceraldehyde 3-phosphate and glycerone phosphate from D-glucose: step 2/4. Its function is as follows. Catalyzes the reversible isomerization of glucose-6-phosphate to fructose-6-phosphate. In Shewanella denitrificans (strain OS217 / ATCC BAA-1090 / DSM 15013), this protein is Glucose-6-phosphate isomerase.